Consider the following 196-residue polypeptide: Small ribosomal subunit protein uS4c (196 aa).

Positions 15 to 36 (LGTLPGLTSKRPRSGSDLKNPL) are disordered. The S4 RNA-binding domain maps to 89–150 (MRLDNILFRL…KQRSKALIQN (62 aa)).

Belongs to the universal ribosomal protein uS4 family. As to quaternary structure, part of the 30S ribosomal subunit. Contacts protein S5. The interaction surface between S4 and S5 is involved in control of translational fidelity.

It is found in the plastid. Its subcellular location is the chloroplast. Functionally, one of the primary rRNA binding proteins, it binds directly to 16S rRNA where it nucleates assembly of the body of the 30S subunit. Its function is as follows. With S5 and S12 plays an important role in translational accuracy. The chain is Small ribosomal subunit protein uS4c (rps4) from Yucca filamentosa (Bear-grass).